Consider the following 1483-residue polypeptide: Rho GTPase-activating protein 23 (1483 aa).

The segment at 15–34 (PEPRPPQLPLGPRDGCSSGR) is disordered. The PDZ domain occupies 71–155 (HCILKEEENG…TLELSIMPKD (85 aa)). Disordered stretches follow at residues 212-276 (ISAL…PGSR) and 300-345 (AGER…GQEG). The span at 316-325 (SQDRLEDVTT) shows a compositional bias: basic and acidic residues. The span at 331–342 (CSTSQDALSQLG) shows a compositional bias: polar residues. Serine 361 and serine 372 each carry phosphoserine. The disordered stretch occupies residues 385–407 (PSARTSACPSRDLTQAPPPSGLQ). Serine 421 carries the post-translational modification Phosphoserine. 2 disordered regions span residues 448-485 (SLAQ…DHRD) and 508-527 (NLGF…RLGR). Phosphoserine occurs at positions 515, 579, 607, and 619. Threonine 652 carries the phosphothreonine modification. Residues serine 655, serine 658, and serine 673 each carry the phosphoserine modification. Residues 684–804 (DIRREGWLYY…WIRAIRENSR (121 aa)) enclose the PH domain. The interval 827 to 848 (KVSHSSGPKADSSPKGSRGLGG) is disordered. Residue lysine 850 forms a Glycyl lysine isopeptide (Lys-Gly) (interchain with G-Cter in SUMO2) linkage. 4 disordered regions span residues 860 to 879 (RGLR…VAAP), 1093 to 1150 (FSDD…SWVP), 1171 to 1361 (KRKK…GSRP), and 1419 to 1469 (ELGG…LQGL). A Rho-GAP domain is found at 901-1093 (IRLEECQPAT…TLIQHSDWFF (193 aa)). A compositionally biased stretch (basic and acidic residues) spans 1099-1110 (KGERTPVDDKEP). 2 stretches are compositionally biased toward polar residues: residues 1133–1144 (GSDSTTCSSAKS) and 1236–1248 (SIVS…STMD). The segment covering 1338-1351 (GSASSSSQESLRPP) has biased composition (low complexity). Residues 1440-1457 (SGLSSLESTKARASSAAS) show a composition bias toward polar residues.

Functionally, GTPase activator for the Rho-type GTPases by converting them to an inactive GDP-bound state. The polypeptide is Rho GTPase-activating protein 23 (Arhgap23) (Mus musculus (Mouse)).